Reading from the N-terminus, the 146-residue chain is MGFTEKQEALVNSSWELFKQNPSYSVLFYTIILKKAPAAKGMFSFLKDSAEVVDSPKLQAHAEKVFGMVHDSAIQLRASGEVVVGDATLGAIHIQKGVVDPHFVVVKEALLETIKEASGEKWSEELSTAWEVAYEGLASAIKKAMN.

The 145-residue stretch at 2–146 (GFTEKQEALV…LASAIKKAMN (145 aa)) folds into the Globin domain. Residues tyrosine 24 and tyrosine 29 each carry the nitrated tyrosine modification. Serine 44 lines the heme b pocket. A Phosphoserine modification is found at serine 44. Histidine 61 is a binding site for O2. Positions 64, 93, and 96 each coordinate heme b. At tyrosine 134 the chain carries Nitrated tyrosine.

It belongs to the plant globin family. Monomer. In terms of processing, nitrated in effective nodules and particularly in hypoxic conditions; this mechanism may play a protective role in the symbiosis by buffering toxic peroxynitrite NO(2)(-). Nitration level decrease during nodule senescence. Phosphorylation at Ser-44 disrupts the molecular environment of its porphyrin ring oxygen binding pocket, thus leading to a reduced oxygen consumption and to the delivery of oxygen O(2) to symbiosomes. As to expression, root nodules.

The protein localises to the cytoplasm. Its subcellular location is the cytosol. The protein resides in the nucleus. Its function is as follows. Leghemoglobin that reversibly binds oxygen O(2) through a pentacoordinated heme iron. In root nodules, facilitates the diffusion of oxygen to the bacteroids while preventing the bacterial nitrogenase from being inactivated by buffering dioxygen, nitric oxide and carbon monoxide, and promoting the formation of reactive oxygen species (ROS, e.g. H(2)O(2)). This role is essential for symbiotic nitrogen fixation (SNF). In Pisum sativum (Garden pea), this protein is Leghemoglobin Lb120-1.